A 250-amino-acid polypeptide reads, in one-letter code: Ribonuclease 3 (250 aa).

Over residues 1–15 (MTKTPAKKKRARSSK) the composition is skewed to basic residues. The interval 1 to 21 (MTKTPAKKKRARSSKAKGTDA) is disordered. The RNase III domain maps to 22–150 (NAALEARIGH…VIGAIFLDGG (129 aa)). Glu-63 serves as a coordination point for Mg(2+). Asp-67 is a catalytic residue. Residues Asp-136 and Glu-139 each contribute to the Mg(2+) site. The active site involves Glu-139. The 70-residue stretch at 175–244 (DPKTVLQEWA…ASVMIEREGV (70 aa)) folds into the DRBM domain.

This sequence belongs to the ribonuclease III family. Homodimer. The cofactor is Mg(2+).

Its subcellular location is the cytoplasm. It carries out the reaction Endonucleolytic cleavage to 5'-phosphomonoester.. Its function is as follows. Digests double-stranded RNA. Involved in the processing of primary rRNA transcript to yield the immediate precursors to the large and small rRNAs (23S and 16S). Processes some mRNAs, and tRNAs when they are encoded in the rRNA operon. Processes pre-crRNA and tracrRNA of type II CRISPR loci if present in the organism. The sequence is that of Ribonuclease 3 from Bradyrhizobium diazoefficiens (strain JCM 10833 / BCRC 13528 / IAM 13628 / NBRC 14792 / USDA 110).